A 711-amino-acid polypeptide reads, in one-letter code: Toxin RTX-III translocation ATP-binding protein (711 aa).

The Peptidase C39 domain maps to 1–129; that stretch reads MESQMPFNEK…EIFQGGMILI (129 aa). Residue His87 is part of the active site. The ABC transmembrane type-1 domain maps to 158–440; it reads FVETIIVSIF…LAQLWQDFQQ (283 aa). 5 helical membrane passes run 162–182, 195–215, 273–293, 299–319, and 392–412; these read IIVSIFLQLFALITPLFFQVV, LNVITVALSVVVIFEIVLSGL, ALTSVLDLLFSFIFFAVMWYY, IVILLSLPCYIAWSIFISPIL, and VMIINLWLGAHLVISGDLSIG. In terms of domain architecture, ABC transporter spans 472-707; it reads IAFKHIRFRY…ENGLYYYLNQ (236 aa). ATP is bound at residue 506 to 513; sequence GRSGSGKS.

Belongs to the ABC transporter superfamily. Protein-1 exporter (TC 3.A.1.109) family. As to quaternary structure, homodimer.

It is found in the cell membrane. Involved in the transport of the toxin RTX-III. The protein is Toxin RTX-III translocation ATP-binding protein (apxIIIB) of Actinobacillus pleuropneumoniae (Haemophilus pleuropneumoniae).